Consider the following 1137-residue polypeptide: DNA-directed RNA polymerase III subunit RPC2 (1137 aa).

A C4-type zinc finger spans residues 1084 to 1099; sequence DVCRTCGRMAYCSWCH. Zn(2+)-binding residues include Cys-1086, Cys-1089, Cys-1098, and Cys-1101.

It belongs to the RNA polymerase beta chain family. In terms of assembly, component of the RNA polymerase III (Pol III) complex consisting of 17 subunits.

It localises to the nucleus. It carries out the reaction RNA(n) + a ribonucleoside 5'-triphosphate = RNA(n+1) + diphosphate. Functionally, DNA-dependent RNA polymerase catalyzes the transcription of DNA into RNA using the four ribonucleoside triphosphates as substrates. Second largest core component of RNA polymerase III which synthesizes small RNAs, such as 5S rRNA and tRNAs. Proposed to contribute to the polymerase catalytic activity and forms the polymerase active center together with the largest subunit. Pol III is composed of mobile elements and Polr3B is part of the core element with the central large cleft and probably a clamp element that moves to open and close the cleft. The sequence is that of DNA-directed RNA polymerase III subunit RPC2 from Drosophila melanogaster (Fruit fly).